The sequence spans 416 residues: Peroxisomal isocitrate dehydrogenase [NADP] (416 aa).

NADP(+) contacts are provided by residues 77–79 (TIT) and R84. T79 contributes to the substrate binding site. Residues 96–102 (SPNGTIR), R111, and R134 each bind substrate. D253 contributes to the Mn(2+) binding site. K261 is an NADP(+) binding site. Position 276 (D276) interacts with Mn(2+). NADP(+) contacts are provided by residues 311 to 316 (GTVTRH) and N329. Positions 414–416 (SRL) match the Peroxisomal targeting signal motif.

Belongs to the isocitrate and isopropylmalate dehydrogenases family. The cofactor is Mg(2+). Mn(2+) is required as a cofactor.

Its subcellular location is the peroxisome. The enzyme catalyses D-threo-isocitrate + NADP(+) = 2-oxoglutarate + CO2 + NADPH. May be involved in response to oxidative stresses. The polypeptide is Peroxisomal isocitrate dehydrogenase [NADP] (ICDH) (Arabidopsis thaliana (Mouse-ear cress)).